We begin with the raw amino-acid sequence, 202 residues long: FMN-dependent NADH:quinone oxidoreductase 2 (202 aa).

Residues S9, 15–17 (SVS), 93–96 (MYNF), and 137–140 (SRGG) contribute to the FMN site.

Belongs to the azoreductase type 1 family. As to quaternary structure, homodimer. It depends on FMN as a cofactor.

It catalyses the reaction 2 a quinone + NADH + H(+) = 2 a 1,4-benzosemiquinone + NAD(+). It carries out the reaction N,N-dimethyl-1,4-phenylenediamine + anthranilate + 2 NAD(+) = 2-(4-dimethylaminophenyl)diazenylbenzoate + 2 NADH + 2 H(+). Its function is as follows. Quinone reductase that provides resistance to thiol-specific stress caused by electrophilic quinones. Functionally, also exhibits azoreductase activity. Catalyzes the reductive cleavage of the azo bond in aromatic azo compounds to the corresponding amines. The chain is FMN-dependent NADH:quinone oxidoreductase 2 from Bradyrhizobium diazoefficiens (strain JCM 10833 / BCRC 13528 / IAM 13628 / NBRC 14792 / USDA 110).